A 590-amino-acid chain; its full sequence is Arginine--tRNA ligase, cytoplasmic (590 aa).

Ala2 is modified (N-acetylalanine). Residues Ser137–Asn139, His148, Tyr322, Asp326, and Gln350 each bind L-arginine. The 'HIGH' region motif lies at Pro138 to Leu149. Residues Asp470–Ser484 form an interaction with tRNA region.

The protein belongs to the class-I aminoacyl-tRNA synthetase family.

It localises to the cytoplasm. The protein localises to the cytosol. It carries out the reaction tRNA(Arg) + L-arginine + ATP = L-arginyl-tRNA(Arg) + AMP + diphosphate. Forms part of a macromolecular complex that catalyzes the attachment of specific amino acids to cognate tRNAs during protein synthesis. The chain is Arginine--tRNA ligase, cytoplasmic from Arabidopsis thaliana (Mouse-ear cress).